We begin with the raw amino-acid sequence, 266 residues long: Non-structural maintenance of chromosomes element 1 homolog (266 aa).

The tract at residues 1-102 (MQGSTRRMGV…SISKMATDFA (102 aa)) is interaction with NSMCE3. The RING-type; atypical zinc finger occupies 191–232 (CNICHSLLIQGQSCETCGIRMHLPCVAKYFQSNAEPRCPHCN). Residues 246–266 (EKERESGVLKSNKKSLRSRQH) are disordered. Ser-251 carries the phosphoserine modification. Residues 256–266 (SNKKSLRSRQH) show a composition bias toward basic residues.

The protein belongs to the NSE1 family. As to quaternary structure, component of the SMC5-SMC6 complex which consists at least of SMC5, SMC6, NSMCE2, NSMCE1, NSMCE4A or EID3 and NSMCE3. NSMCE1, NSMCE4A or EID3 and NSMCE3 probably form a subcomplex that bridges the head domains of the SMC5-SMC6 heterodimer. Interacts with NSMCE3. Interacts with MAGEF1. Ubiquitinated.

It localises to the nucleus. It is found in the chromosome. The protein localises to the telomere. It catalyses the reaction S-ubiquitinyl-[E2 ubiquitin-conjugating enzyme]-L-cysteine + [acceptor protein]-L-lysine = [E2 ubiquitin-conjugating enzyme]-L-cysteine + N(6)-ubiquitinyl-[acceptor protein]-L-lysine.. Functionally, RING-type zinc finger-containing E3 ubiquitin ligase that assembles with melanoma antigen protein (MAGE) to catalyze the direct transfer of ubiquitin from E2 ubiquitin-conjugating enzyme to a specific substrate. Within MAGE-RING ubiquitin ligase complex, MAGE stimulates and specifies ubiquitin ligase activity likely through recruitment and/or stabilization of the E2 ubiquitin-conjugating enzyme at the E3:substrate complex. Involved in maintenance of genome integrity, DNA damage response and DNA repair. NSMCE3/MAGEG1 and NSMCE1 ubiquitin ligase are components of SMC5-SMC6 complex and may positively regulate homologous recombination-mediated DNA repair. MAGEF1-NSMCE1 ubiquitin ligase promotes proteasomal degradation of MMS19, a key component of the cytosolic iron-sulfur protein assembly (CIA) machinery. Down-regulation of MMS19 impairs the activity of several DNA repair and metabolism enzymes such as ERCC2/XPD, FANCJ, RTEL1 and POLD1 that require iron-sulfur clusters as cofactors. The protein is Non-structural maintenance of chromosomes element 1 homolog of Homo sapiens (Human).